We begin with the raw amino-acid sequence, 74 residues long: Conotoxin Vc6.11 (74 aa).

A signal peptide spans 1–19 (MEKLTILLLVAAVLMSTQA). The propeptide occupies 20–41 (LIQEQRQKAKINLFSKRKPSAE). 2 disulfides stabilise this stretch: Cys55–Cys66 and Cys61–Cys71.

This sequence belongs to the conotoxin O2 superfamily. Expressed by the venom duct.

The protein localises to the secreted. Inhibits voltage-gated ion channels. This chain is Conotoxin Vc6.11, found in Conus victoriae (Queen Victoria cone).